Here is a 179-residue protein sequence, read N- to C-terminus: Large ribosomal subunit protein uL5 (179 aa).

The protein belongs to the universal ribosomal protein uL5 family. In terms of assembly, part of the 50S ribosomal subunit; part of the 5S rRNA/L5/L18/L25 subcomplex. Contacts the 5S rRNA and the P site tRNA. Forms a bridge to the 30S subunit in the 70S ribosome.

This is one of the proteins that bind and probably mediate the attachment of the 5S RNA into the large ribosomal subunit, where it forms part of the central protuberance. In the 70S ribosome it contacts protein S13 of the 30S subunit (bridge B1b), connecting the 2 subunits; this bridge is implicated in subunit movement. Contacts the P site tRNA; the 5S rRNA and some of its associated proteins might help stabilize positioning of ribosome-bound tRNAs. The sequence is that of Large ribosomal subunit protein uL5 from Alcanivorax borkumensis (strain ATCC 700651 / DSM 11573 / NCIMB 13689 / SK2).